Here is a 488-residue protein sequence, read N- to C-terminus: Palmitoyltransferase ZDHHC14 (488 aa).

At 1–60 (MPPGGGGPMKDCEYSQISTHSSSPMESPHKKKKIAARRKWEVFPGRNKFFCNGRIMMARQ) the chain is on the cytoplasmic side. A helical membrane pass occupies residues 61–81 (TGVFYLTLVLILVTSGLFFAF). At 82 to 89 (DCPYLAVK) the chain is on the lumenal side. The helical transmembrane segment at 90–110 (ITPAIPAVAGILFFFVMGTLL) threads the bilayer. Residues 111–208 (RTSFSDPGVL…GNCVGKRNYR (98 aa)) are Cytoplasmic-facing. The DHHC domain maps to 165–215 (KYCFTCKIFRPPRASHCSLCDNCVERFDHHCPWVGNCVGKRNYRFFYMFIL). Cys-195 functions as the S-palmitoyl cysteine intermediate in the catalytic mechanism. A helical membrane pass occupies residues 209–229 (FFYMFILSLSFLTVFIFAFVI). Residues 230–255 (THVILRSQQTGFLNALKDSPASVLEA) lie on the Lumenal side of the membrane. The helical transmembrane segment at 256 to 276 (VVCFFSVWSIVGLSGFHTYLI) threads the bilayer. Topologically, residues 277 to 488 (SSNQTTNEDI…VRGLVKLSSV (212 aa)) are cytoplasmic. Ser-455 bears the Phosphoserine mark.

The protein belongs to the DHHC palmitoyltransferase family. ERF2/ZDHHC9 subfamily. Widely expressed.

The protein resides in the endoplasmic reticulum membrane. Its subcellular location is the golgi apparatus. It localises to the golgi stack membrane. It carries out the reaction L-cysteinyl-[protein] + hexadecanoyl-CoA = S-hexadecanoyl-L-cysteinyl-[protein] + CoA. Palmitoyltransferase that could catalyze the addition of palmitate onto various protein substrates. May have a palmitoyltransferase activity toward the beta-2 adrenergic receptor/ADRB2 and thereby regulate G protein-coupled receptor signaling. May play a role in cell differentiation and apoptosis. The chain is Palmitoyltransferase ZDHHC14 from Homo sapiens (Human).